The following is a 274-amino-acid chain: MTHIEIRHAMDPVSARQLDTAGLREAFHMADLFHEGEIRLVYTHYDRMIVGGAVPAGAPLVLDEVKPTGTASILDRREMGVVNIGGPGTVSAAGETWEMGRGDVLYLPMGAGPVTFAGQGRFYILSAPAHTAHPARLVTLADAKKVKMGAPETANERTINQFIHPEVMPSCQLVVGYTQFHGGSVWNTMPAHVHDRRMEVYLYFDLAQHARVFHFMGEPSETRHLVMKNEEAVVSPPWSIHCGCGTGAYTFIWAMAGDNVDYRDVEPVAMEDLR.

Positions 192, 194, 199, and 241 each coordinate Zn(2+).

It belongs to the KduI family. Requires Zn(2+) as cofactor.

The enzyme catalyses 5-dehydro-4-deoxy-D-glucuronate = 3-deoxy-D-glycero-2,5-hexodiulosonate. The protein operates within glycan metabolism; pectin degradation; 2-dehydro-3-deoxy-D-gluconate from pectin: step 4/5. In terms of biological role, catalyzes the isomerization of 5-dehydro-4-deoxy-D-glucuronate to 3-deoxy-D-glycero-2,5-hexodiulosonate. The protein is 4-deoxy-L-threo-5-hexosulose-uronate ketol-isomerase of Cereibacter sphaeroides (strain ATCC 17025 / ATH 2.4.3) (Rhodobacter sphaeroides).